Reading from the N-terminus, the 572-residue chain is MNLHQTVEHEAAAAFAAAGIADSPIVLQPTKNAEHGDFQINGVMGAAKKAKQNPRELAQKVAEALADNAVIESAEVAGPGFINLRLRPEFLAQNIQTALNDARFGVAKTDKPQTVVIDYSSPNLAKEMHVGHLRSSIIGDSISRVLAFMGNTVIRQNHVGDWGTQFGMLVAYLVEQQKDNAAFELADLEQFYRAAKVRFDEDPAFADTAREYVVKLQGGDETVLALWKQFVDISLSHAQAVYDTLGLKLRPEDVAGESKYNDDLQPVVDDLVQKGLAVEDDGAKVVFLDEFKNKEGEPAAFIVQKQGGGFLYASTDLACLRYRIGRLKADRLLYVVDHRQALHFEQLFTTSRKAGYLPENVGAAFIGFGTMMGKDGKPFKTRSGDTVKLVDLLTEAVERATALVKEKNPELGADEAAKIGKTVGIGAVKYADLSKNRTSDYVFDWDAMLSFEGNTAPYLQYAYTRVQSVFRKAGEWDANAPTVLTEPLEKQLAAELLKFEDVLQSVADTAYPHYLAAYLYQIATLFSRFYEACPILKAEGASRNSRLQLAKLTGDTLKQGLDLLGIDVLDVM.

The 'HIGH' region signature appears at 122–132 (PNLAKEMHVGH).

It belongs to the class-I aminoacyl-tRNA synthetase family. As to quaternary structure, monomer.

The protein resides in the cytoplasm. The catalysed reaction is tRNA(Arg) + L-arginine + ATP = L-arginyl-tRNA(Arg) + AMP + diphosphate. The chain is Arginine--tRNA ligase from Neisseria meningitidis serogroup B (strain ATCC BAA-335 / MC58).